We begin with the raw amino-acid sequence, 57 residues long: Granulin-3 (57 aa).

Cystine bridges form between cysteine 4–cysteine 16 and cysteine 10–cysteine 26.

Belongs to the granulin family. Granulins are disulfide bridged. In terms of tissue distribution, ubiquitous.

The protein resides in the secreted. Granulins have possible cytokine-like activity. They may play a role in inflammation, wound repair, and tissue remodeling. This is Granulin-3 from Cyprinus carpio (Common carp).